The primary structure comprises 528 residues: Atypical kinase COQ8B, mitochondrial (528 aa).

Residues 93–109 (LASFGGLAVGLGLGALA) traverse the membrane as a helical segment. A KxGQ motif motif is present at residues 151–154 (KIGQ). A Protein kinase domain is found at 187 to 419 (MMKVLEEELG…DRVLQKSQDL (233 aa)). The short motif at 212–215 (AAAS) is the AAAS motif element. Residues serine 215, lysine 233, and 320 to 323 (MELA) contribute to the ATP site. The active-site Proton acceptor is aspartate 363. Residues asparagine 368 and aspartate 382 each contribute to the ATP site.

It belongs to the protein kinase superfamily. ADCK protein kinase family. As to quaternary structure, homodimer; homodimerizes via its transmembrane region. Interacts with COQ6 and COQ7. Interacts with the multi-subunit COQ enzyme complex, composed of at least COQ3, COQ4, COQ5, COQ6, COQ7 and COQ9. In the kidney, expressed in glomeruli, predominantly in podocyte foot precesses, as well as in proximal tubules and collecting ducts (at protein level).

It localises to the mitochondrion membrane. The protein localises to the cytoplasm. Its subcellular location is the cytosol. The protein resides in the cell membrane. The protein operates within cofactor biosynthesis; ubiquinone biosynthesis. Functionally, atypical kinase involved in the biosynthesis of coenzyme Q, also named ubiquinone, an essential lipid-soluble electron transporter for aerobic cellular respiration. Its substrate specificity is still unclear: may act as a protein kinase that mediates phosphorylation of COQ3. According to other reports, acts as a small molecule kinase, possibly a lipid kinase that phosphorylates a prenyl lipid in the ubiquinone biosynthesis pathway, as suggested by its ability to bind coenzyme Q lipid intermediates. However, the small molecule kinase activity was not confirmed by another publication. Required for podocyte migration. In Rattus norvegicus (Rat), this protein is Atypical kinase COQ8B, mitochondrial.